The sequence spans 120 residues: PE family protein PE10 (120 aa).

The disordered stretch occupies residues 29–59 (GQVTGNGGSGNSGTSAAAANPNSDNTASIAD). The segment covering 40–51 (SGTSAAAANPNS) has biased composition (low complexity).

Belongs to the mycobacterial PE family. Forms a complex with PE9. The complex interacts with human TLR4.

The protein localises to the secreted. It localises to the cell wall. In terms of biological role, together with PE9, induces macrophage apoptosis through human Toll-like receptor 4 (TLR4) signaling pathway. Interaction with TLR4 leads to increased levels of phospho-IRF-3, increase in the transcript levels of IFN-beta and pro-apoptotic genes, up-regulation of IL-10, down-regulation of IL-1b and enhanced levels of macrophage apoptosis. This is PE family protein PE10 from Mycobacterium tuberculosis (strain ATCC 25618 / H37Rv).